Here is a 372-residue protein sequence, read N- to C-terminus: N-methyl-L-tryptophan oxidase (372 aa).

4-34 (DLIIIGSGSVGAAAGYYATRAGLKVLMTDAH) is an FAD binding site. Position 307 is an S-8alpha-FAD cysteine (cysteine 307).

It belongs to the MSOX/MTOX family. MTOX subfamily. Monomer. FAD is required as a cofactor.

It catalyses the reaction N(alpha)-methyl-L-tryptophan + O2 + H2O = L-tryptophan + formaldehyde + H2O2. Functionally, catalyzes the oxidative demethylation of N-methyl-L-tryptophan. This chain is N-methyl-L-tryptophan oxidase, found in Salmonella newport (strain SL254).